Consider the following 71-residue polypeptide: MASLKITQVRSTIGVRWKQRESLRTLGLRRIRHSVIREDNLQTRGLIAVVRHLVEVEPATGGSTPVGGGRD.

This sequence belongs to the universal ribosomal protein uL30 family. Part of the 50S ribosomal subunit.

This chain is Large ribosomal subunit protein uL30, found in Mycobacterium leprae (strain TN).